The sequence spans 63 residues: Large ribosomal subunit protein uL29 (63 aa).

Belongs to the universal ribosomal protein uL29 family.

The sequence is that of Large ribosomal subunit protein uL29 from Bordetella pertussis (strain Tohama I / ATCC BAA-589 / NCTC 13251).